The following is a 384-amino-acid chain: S-adenosylmethionine synthase (384 aa).

His15 lines the ATP pocket. Position 17 (Asp17) interacts with Mg(2+). Glu43 serves as a coordination point for K(+). Residues Glu56 and Gln99 each contribute to the L-methionine site. The flexible loop stretch occupies residues 99 to 109 (QSPDINQGVDR). Residues 164 to 166 (DAK), 230 to 231 (RF), Asp239, 245 to 246 (RK), Ala262, and Lys266 each bind ATP. Asp239 is an L-methionine binding site. Lys270 provides a ligand contact to L-methionine.

The protein belongs to the AdoMet synthase family. In terms of assembly, homotetramer; dimer of dimers. It depends on Mg(2+) as a cofactor. Requires K(+) as cofactor.

It is found in the cytoplasm. It carries out the reaction L-methionine + ATP + H2O = S-adenosyl-L-methionine + phosphate + diphosphate. The protein operates within amino-acid biosynthesis; S-adenosyl-L-methionine biosynthesis; S-adenosyl-L-methionine from L-methionine: step 1/1. Its function is as follows. Catalyzes the formation of S-adenosylmethionine (AdoMet) from methionine and ATP. The overall synthetic reaction is composed of two sequential steps, AdoMet formation and the subsequent tripolyphosphate hydrolysis which occurs prior to release of AdoMet from the enzyme. This chain is S-adenosylmethionine synthase, found in Escherichia fergusonii (strain ATCC 35469 / DSM 13698 / CCUG 18766 / IAM 14443 / JCM 21226 / LMG 7866 / NBRC 102419 / NCTC 12128 / CDC 0568-73).